The following is a 570-amino-acid chain: Protein translocase subunit SecD (570 aa).

A compositionally biased stretch (polar residues) spans Gly-104–Gly-117. The tract at residues Gly-104–Thr-198 is disordered. Residues Lys-122 to Lys-146 show a composition bias toward basic and acidic residues. Composition is skewed to low complexity over residues Ala-147 to Ser-161 and Ala-172 to Asp-196. Helical transmembrane passes span Ala-370 to Tyr-390, Phe-395 to Leu-415, Ile-419 to Ala-439, Ile-474 to Gly-494, and Gly-498 to Thr-518. The tract at residues Leu-540–Ala-570 is disordered.

Belongs to the SecD/SecF family. SecD subfamily. Forms a complex with SecF. Part of the essential Sec protein translocation apparatus which comprises SecA, SecYEG and auxiliary proteins SecDF. Other proteins may also be involved.

The protein resides in the cell membrane. In terms of biological role, part of the Sec protein translocase complex. Interacts with the SecYEG preprotein conducting channel. SecDF uses the proton motive force (PMF) to complete protein translocation after the ATP-dependent function of SecA. In Streptomyces coelicolor (strain ATCC BAA-471 / A3(2) / M145), this protein is Protein translocase subunit SecD.